We begin with the raw amino-acid sequence, 61 residues long: Large ribosomal subunit protein bL28 (61 aa).

Residues 1 to 21 (MAKDYVTGKKTTFGNKRSHAM) are disordered.

It belongs to the bacterial ribosomal protein bL28 family.

This is Large ribosomal subunit protein bL28 from Lactobacillus helveticus (strain DPC 4571).